We begin with the raw amino-acid sequence, 257 residues long: Acetylglutamate kinase (257 aa).

Substrate is bound by residues 43–44 (GG), Arg-65, and Asn-157. Residues 180–185 (DVSGIL) and 208–210 (IIT) each bind ATP.

Belongs to the acetylglutamate kinase family. ArgB subfamily. As to quaternary structure, homodimer.

It localises to the cytoplasm. It carries out the reaction N-acetyl-L-glutamate + ATP = N-acetyl-L-glutamyl 5-phosphate + ADP. Its pathway is amino-acid biosynthesis; L-arginine biosynthesis; N(2)-acetyl-L-ornithine from L-glutamate: step 2/4. Functionally, catalyzes the ATP-dependent phosphorylation of N-acetyl-L-glutamate. In Serratia proteamaculans (strain 568), this protein is Acetylglutamate kinase.